The primary structure comprises 229 residues: Potassium/proton antiporter CemA (229 aa).

3 helical membrane-spanning segments follow: residues 7–27, 107–127, and 189–209; these read FTPLFYLASIVFLPWWISFSV, ILHFSTNIICFIILSGYSILG, and IISGLVSTFPVILDTIFKYWI.

The protein belongs to the CemA family.

Its subcellular location is the plastid. It localises to the chloroplast inner membrane. It catalyses the reaction K(+)(in) + H(+)(out) = K(+)(out) + H(+)(in). In terms of biological role, contributes to K(+)/H(+) antiport activity by supporting proton efflux to control proton extrusion and homeostasis in chloroplasts in a light-dependent manner to modulate photosynthesis. Prevents excessive induction of non-photochemical quenching (NPQ) under continuous-light conditions. Indirectly promotes efficient inorganic carbon uptake into chloroplasts. This is Potassium/proton antiporter CemA from Nicotiana tomentosiformis (Tobacco).